A 396-amino-acid polypeptide reads, in one-letter code: L-cysteine desulfidase (396 aa).

The Proton acceptor role is filled by C23. Residues C287, C329, and C336 each coordinate [4Fe-4S] cluster.

This sequence belongs to the L-cysteine desulfidase family. As to quaternary structure, homotrimer. Requires [4Fe-4S] cluster as cofactor.

It catalyses the reaction L-cysteine + H2O = hydrogen sulfide + pyruvate + NH4(+) + H(+). Its function is as follows. Catalyzes the cleavage of L-cysteine to form 2-aminoprop-2-enoate and sulfide. The former then spontaneously hydrolyzes to pyruvate and NH(3). May be responsible for the production of sulfide required for the biosynthesis of iron-sulfur centers in this archaea. This is L-cysteine desulfidase from Methanococcus maripaludis (strain DSM 14266 / JCM 13030 / NBRC 101832 / S2 / LL).